Consider the following 179-residue polypeptide: Phospholipase A2 (179 aa).

The signal sequence occupies residues 1–21 (MHALRSSVLALWLCLHVSVRA). Residues 22 to 39 (WMTYRSANGLDEYEPEDR) constitute a propeptide that is removed on maturation. The Ca(2+) site is built by tryptophan 47, glycine 49, and glycine 51. Disulfide bonds link cysteine 48–cysteine 70, cysteine 69–cysteine 109, cysteine 76–cysteine 102, cysteine 100–cysteine 133, and cysteine 142–cysteine 150. Histidine 73 is an active-site residue. Aspartate 74 serves as a coordination point for Ca(2+). The active site involves aspartate 103.

Belongs to the phospholipase A2 family. Group III subfamily. Requires Ca(2+) as cofactor. As to expression, expressed by the venom gland.

It localises to the secreted. The catalysed reaction is a 1,2-diacyl-sn-glycero-3-phosphocholine + H2O = a 1-acyl-sn-glycero-3-phosphocholine + a fatty acid + H(+). In terms of biological role, may potentiate Xylotoxin(1)-Xa1a DRG activation and cell lysis, since the orthologous A.mellifera PA2 potentiates Xylotoxin(1)-Xa1a DRG activation and cell lysis. In vivo, intraplantar injection in mice may potentiate spontaneous pain behaviors and paw swelling caused by Xylotoxin(1)-Xa1a, since the orthologous A.mellifera PA2 shows this effect. PLA2 catalyzes the calcium-dependent hydrolysis of the 2-acyl groups in 3-sn-phosphoglycerides. This chain is Phospholipase A2, found in Xylocopa aruana (Great carpenter bee).